A 215-amino-acid chain; its full sequence is Cytochrome b6 (215 aa).

A helical transmembrane segment spans residues 32–52 (IFYCLGGITFTLFLVQVATGF). Cys35 is a binding site for heme c. Residues His86 and His100 each contribute to the heme b site. The next 3 membrane-spanning stretches (helical) occupy residues 90 to 110 (ASMM…TGGF), 116 to 136 (LTWI…VTGY), and 186 to 206 (LHTF…FLMI). Residues His187 and His202 each coordinate heme b.

It belongs to the cytochrome b family. PetB subfamily. As to quaternary structure, the 4 large subunits of the cytochrome b6-f complex are cytochrome b6, subunit IV (17 kDa polypeptide, PetD), cytochrome f and the Rieske protein, while the 4 small subunits are PetG, PetL, PetM and PetN. The complex functions as a dimer. Requires heme b as cofactor. Heme c is required as a cofactor.

The protein localises to the plastid. It is found in the chloroplast thylakoid membrane. Functionally, component of the cytochrome b6-f complex, which mediates electron transfer between photosystem II (PSII) and photosystem I (PSI), cyclic electron flow around PSI, and state transitions. The chain is Cytochrome b6 from Tupiella akineta (Green alga).